A 486-amino-acid polypeptide reads, in one-letter code: Ribulose bisphosphate carboxylase large chain (486 aa).

The substrate site is built by N125 and T175. The active-site Proton acceptor is K177. Residue K179 coordinates substrate. Mg(2+) is bound by residues K203, D205, and E206. K203 carries the post-translational modification N6-carboxylysine. H295 serves as the catalytic Proton acceptor. Substrate contacts are provided by R296, H328, and S380.

The protein belongs to the RuBisCO large chain family. Type I subfamily. In terms of assembly, heterohexadecamer of 8 large chains and 8 small chains. Requires Mg(2+) as cofactor.

The enzyme catalyses 2 (2R)-3-phosphoglycerate + 2 H(+) = D-ribulose 1,5-bisphosphate + CO2 + H2O. The catalysed reaction is D-ribulose 1,5-bisphosphate + O2 = 2-phosphoglycolate + (2R)-3-phosphoglycerate + 2 H(+). RuBisCO catalyzes two reactions: the carboxylation of D-ribulose 1,5-bisphosphate, the primary event in carbon dioxide fixation, as well as the oxidative fragmentation of the pentose substrate. Both reactions occur simultaneously and in competition at the same active site. The sequence is that of Ribulose bisphosphate carboxylase large chain from Aurantimonas manganoxydans (strain ATCC BAA-1229 / DSM 21871 / SI85-9A1).